Here is a 238-residue protein sequence, read N- to C-terminus: Small ribosomal subunit protein uS2 (238 aa).

Belongs to the universal ribosomal protein uS2 family.

The sequence is that of Small ribosomal subunit protein uS2 from Moorella thermoacetica (strain ATCC 39073 / JCM 9320).